We begin with the raw amino-acid sequence, 830 residues long: MAIKSLESFLFERGLVGSYAIEALNNCTLDIDVNHYVSRLLTNKREQYLDAIGGFPTSLKMYLESDLKIFKDFNITPIFVFNGGLTYNQLEASGHFTAASASASISSTTTSSSGTNATTRSNTESVLLQRSRGWTQWNNLISSNQNSYIDQPIQPQEPFRHNTTIDSKAYQNDLIAYFIEHGYMYQVAPYSSWFQLAYLLNSAYIDAIYGPTDCLMLDCVDRFILGMEFPNKEFRFIDRSRVMKDLGCTHEEFIDIAMAVGNDLQPTTLPPLQIYPVPQLFDIALEMVLNTGTNFYAYQLSTTLQNDSKENIQNYQRGISALRYMPVLKDTGKVELFVQEIVVSEEDSEKNNKDGKKSNLSSPSSASSSASPATTVTKNASEKLTYEKSSTKEVRKPRDIPNDVHDFIGQMLPHEYYFYRSIGLVTGKLFDAIVTGVYPEEPPLGGGSSTSYKKLVSKSVEIFKNKEINLLTQPINRYYQIKQIKQVKWYAANEPTTLTNRMSPSMFETINHLIVKTETSDEKEFSISEFITTINGSSNMAKDFISEKVIFPNSVPIESKLNSPFNLLSTNFLRLLVLLEFFTFDFKEKLLEPTRWGEVFLKLNELNIDSKYHESVIIFLVFLKCDVLKLDEEVQPPAPSALSQATLRSYPEESLYVLLITRVLTLFQVDQKPSNYHGPIDKKTLIFRDHLSFIKENLNELFEAVLISSLTSGEFNRLSLDNFGWARKIVRYLPFKLDSPNTIMAMMWEFFLQKYLHNGNAKNDALSLVATEFNTYKSTPNLDEQFVESHRFLLEISKVMQELNAAKLIDENVFKLFTKAVEFTTTALSS.

Lysine 4 participates in a covalent cross-link: Glycyl lysine isopeptide (Lys-Gly) (interchain with G-Cter in ubiquitin). The interval 130–380 (RSRGWTQWNN…SPATTVTKNA (251 aa)) is interaction with PBP1. A disordered region spans residues 347 to 400 (DSEKNNKDGKKSNLSSPSSASSSASPATTVTKNASEKLTYEKSSTKEVRKPRDI). Residues serine 358, serine 362, and serine 371 each carry the phosphoserine modification. Residues 361–373 (SSPSSASSSASPA) are compositionally biased toward low complexity. The segment covering 380–400 (ASEKLTYEKSSTKEVRKPRDI) has biased composition (basic and acidic residues).

It belongs to the XPG/RAD2 endonuclease family. As to quaternary structure, interacts (via C-terminus) with PBP1 (via C-terminus).

The protein resides in the cytoplasm. The protein localises to the cytosol. Its function is as follows. Involved in 3'-UTR mediated RNA regulation. Binds to RNA-binding and RNA regulatory proteins. Complexes with PAB1-binding protein to promote mRNA interactions with poly(A)-binding protein. Promotes mating-type switching in mother cells by positively regulating HO expression. The chain is Post-transcriptional regulator MKT1 (MKT1) from Saccharomyces cerevisiae (strain ATCC 204508 / S288c) (Baker's yeast).